A 337-amino-acid chain; its full sequence is G-protein coupled receptor 26 (337 aa).

Topologically, residues 1–10 are extracellular; sequence MNSWDAGLAG. A helical membrane pass occupies residues 11-31; the sequence is LLVGTMGVSLLSNALVLLCLL. Residues 32–47 are Cytoplasmic-facing; the sequence is HSADIRRQAPALFTLN. A helical membrane pass occupies residues 48-68; that stretch reads LTCGNLLCTVVNMPLTLAGVV. At 69 to 81 the chain is on the extracellular side; sequence AQRQPAGDRLCRL. A disulfide bridge connects residues C79 and C156. The helical transmembrane segment at 82–102 threads the bilayer; sequence AAFLDTFLAANSMLSMAALSI. The Cytoplasmic segment spans residues 103-123; that stretch reads DRWVAVVFPLSYRAKMRLRDA. Residues 124-144 traverse the membrane as a helical segment; the sequence is ALMVAYTWLHALTFPAAALAL. Topologically, residues 145-168 are extracellular; the sequence is SWLGFHQLYASCTLCSRRPDERLR. Residues 169 to 189 form a helical membrane-spanning segment; it reads FAVFTGAFHALSFLLSFVVLC. Residues 190-245 lie on the Cytoplasmic side of the membrane; that stretch reads CTYLKVLKVARFHCKRIDVITMQTLVLLVDLHPSVRERCLEEQKRRRQRATKKIST. Residues 246-266 traverse the membrane as a helical segment; it reads FIGTFLVCFAPYVITRLVELF. Over 267–276 the chain is Extracellular; it reads STVPIGSHWG. A helical transmembrane segment spans residues 277–297; that stretch reads VLSKCLAYSKAASDPFVYSLL. Topologically, residues 298-337 are cytoplasmic; the sequence is RHQYRKSCKEILNRLLHRRSIHSSGLTGDSHSQNILPVSE.

This sequence belongs to the G-protein coupled receptor 1 family. As to expression, highly expressed in the CNS, the highest expression is seen in the amygdala, hippocampus and thalamus. Weak expression is detected in testis. Down-regulated in glioblastoma.

The protein localises to the cell membrane. Its function is as follows. Orphan receptor. Displays a significant level of constitutive activity. Its effect is mediated by G(s)-alpha protein that stimulate adenylate cyclase, resulting in an elevation of intracellular cAMP. The sequence is that of G-protein coupled receptor 26 (GPR26) from Homo sapiens (Human).